Reading from the N-terminus, the 477-residue chain is Proton-coupled amino acid transporter 3 (477 aa).

Residues 1 to 13 are compositionally biased toward basic and acidic residues; the sequence is MGKTPLLREDGRC. Positions 1–42 are disordered; it reads MGKTPLLREDGRCQRNTFGGSKASSKGSSSSSSNNTVSSKKK. The Cytoplasmic portion of the chain corresponds to 1–54; that stretch reads MGKTPLLREDGRCQRNTFGGSKASSKGSSSSSSNNTVSSKKKPRRKADALMFIQ. Over residues 19-38 the composition is skewed to low complexity; the sequence is GGSKASSKGSSSSSSNNTVS. Residues 55–75 traverse the membrane as a helical segment; sequence IFIHLLKSNIGTGFLGLPLAV. Residues 76-77 lie on the Extracellular side of the membrane; sequence KN. Residues 78-98 traverse the membrane as a helical segment; that stretch reads AGLLVGPVSLLAIGALTVHCM. At 99 to 144 the chain is on the cytoplasmic side; that stretch reads DILLNCACHLTSRLQRSFVNYEETTMYSLETCPSPWLRTHSVWGRY. A helical membrane pass occupies residues 145–165; that stretch reads VVSFLLIVTQLGFCSVYFMFM. Over 166-202 the chain is Extracellular; the sequence is ADNLQQIVEEAHFTSNVCQPRQSLVMTSILDTRFYML. Residues 203–223 traverse the membrane as a helical segment; it reads TILPFLILLVLVQNPQVLSIF. The Cytoplasmic portion of the chain corresponds to 224-225; that stretch reads ST. A helical membrane pass occupies residues 226–246; sequence LATITTLSSLALIFEYLIQIP. Topologically, residues 247–259 are extracellular; that stretch reads HHSHLPLVASWKT. Residues 260 to 280 traverse the membrane as a helical segment; that stretch reads FLLFFGTAIFTFEGVGMVLPL. The Cytoplasmic portion of the chain corresponds to 281–291; the sequence is KSQMKSPQQFP. A helical membrane pass occupies residues 292 to 312; sequence AVLYLGMSFVIFLYICLGTLG. Topologically, residues 313 to 344 are extracellular; the sequence is YMKFGADTQASITLNLPNCWLYQSVKLMYSVG. Residues 345-365 form a helical membrane-spanning segment; sequence IFFTYALQFHVPAEIIVPYVV. Over 366 to 374 the chain is Cytoplasmic; it reads SRASENWAL. The helical transmembrane segment at 375–395 threads the bilayer; it reads FIDLTVRAALVCLTCFSAVLI. Topologically, residues 396-399 are extracellular; it reads PRLD. A helical transmembrane segment spans residues 400–420; that stretch reads LVISLVGSVSSSALALIIPPL. The Cytoplasmic portion of the chain corresponds to 421–439; the sequence is LEIATFYSENISCTTIAKD. The helical transmembrane segment at 440–460 threads the bilayer; sequence IMISILGLLGCVLGTYQALYE. Residues 461 to 477 lie on the Extracellular side of the membrane; that stretch reads MTQQSRFPMLNSTNVHT.

The protein belongs to the amino acid/polyamine transporter 2 family.

Its subcellular location is the membrane. This is Proton-coupled amino acid transporter 3 (Slc36a3) from Rattus norvegicus (Rat).